A 397-amino-acid polypeptide reads, in one-letter code: Lysophospholipid transporter LplT (397 aa).

11 consecutive transmembrane segments (helical) span residues 16–36 (MLAV…LLFA), 53–73 (VLQM…GQFA), 91–111 (LGAG…LVGI), 139–159 (LMES…GILA), 164–184 (LAAL…NLWI), 227–247 (LFWG…PVAL), 253–273 (AMPT…AGAA), 281–301 (TVSR…AFAV), 305–325 (LLPA…FIVP), 352–372 (NVAM…GVPP), and 373–393 (VAVG…LWVW).

Belongs to the major facilitator superfamily. LplT (TC 2.A.1.42) family.

It localises to the cell inner membrane. Catalyzes the facilitated diffusion of 2-acyl-glycero-3-phosphoethanolamine (2-acyl-GPE) into the cell. The sequence is that of Lysophospholipid transporter LplT from Klebsiella pneumoniae (strain 342).